The following is a 1854-amino-acid chain: Protein virilizer (1854 aa).

S186 carries the post-translational modification Phosphoserine. 2 stretches are compositionally biased toward basic and acidic residues: residues 202–214 (YHQH…QREM) and 236–259 (THSE…DWSR). 5 disordered regions span residues 202 to 361 (YHQH…EIIG), 777 to 821 (NPEE…GKPV), 1570 to 1589 (TSTE…ASSC), 1720 to 1788 (VRGR…NRGS), and 1804 to 1854 (IGSP…SYLR). Phosphoserine is present on residues S258, S260, and S276. Residues 275-285 (RSRSVVDEHKW) are compositionally biased toward basic and acidic residues. T288 bears the Phosphothreonine mark. S295 is modified (phosphoserine). T297 is subject to Phosphothreonine. A phosphoserine mark is found at S301 and S312. Basic and acidic residues-rich tracts occupy residues 325–343 (HSSE…EDRS) and 777–796 (NPEE…KAME). A coiled-coil region spans residues 779 to 808 (EEKEEKAEKSDAEDKAMEVENEAVEAGGEK). 2 stretches are compositionally biased toward low complexity: residues 1738-1748 (SRPPNTSRPPS) and 1816-1838 (SYRS…PHYS).

It belongs to the vir family. As to quaternary structure, component of the WMM complex, a N6-methyltransferase complex composed of a catalytic subcomplex, named MAC, and of an associated subcomplex, named MACOM. The MAC subcomplex is composed of Ime4/Mettl3 and Mettl14. The MACOM subcomplex is composed of fl(2)d, Flacc/Xio, Hakai, vir, and, in some cases of nito. Part of a complex containing fl(2)d, Sxl and vir.

It is found in the nucleus. In terms of biological role, associated component of the WMM complex, a complex that mediates N6-methyladenosine (m6A) methylation of mRNAs, a modification that plays a role in the efficiency of mRNA splicing and is required for sex determination. Required for sex determination and dosage compensation via Sxl alternative splicing: m6A methylation acts as a key regulator of Sxl pre-mRNA and promotes female-specific alternative splicing of Sxl, which determines female physiognomy. M6A methylation is also required for neuronal functions. Required for proper inclusion of regulated exons in Ubx transcripts, leading to isoforms Ia/b and IIa/b. The sequence is that of Protein virilizer from Drosophila melanogaster (Fruit fly).